The sequence spans 772 residues: Acylamino-acid-releasing enzyme 2 (772 aa).

Catalysis depends on charge relay system residues Ser-617, Asp-708, and His-740.

The protein belongs to the peptidase S9C family. As to quaternary structure, homotetramer.

Its subcellular location is the cytoplasm. The catalysed reaction is Cleavage of an N-acetyl or N-formyl amino acid from the N-terminus of a polypeptide.. In terms of biological role, catalyzes the hydrolysis of the N-terminal peptide bond of an N-acetylated peptide to generate an N-acetylated amino acid and a peptide with a free N-terminus. This is Acylamino-acid-releasing enzyme 2 from Oryza sativa subsp. japonica (Rice).